A 177-amino-acid chain; its full sequence is Secretion monitor (177 aa).

Positions 1–37 are cleaved as a signal peptide; the sequence is MIGILNRWRQFGRRYFWPHLLLGMVAASLGVPLNLSG.

The protein belongs to the SecM family.

The protein localises to the cytoplasm. The protein resides in the cytosol. It is found in the periplasm. In terms of biological role, regulates secA expression by translational coupling of the secM secA operon. Translational pausing at a specific Pro residue 5 residues before the end of the protein may allow disruption of a mRNA repressor helix that normally suppresses secA translation initiation. The protein is Secretion monitor of Yersinia pestis bv. Antiqua (strain Antiqua).